The primary structure comprises 432 residues: 3-phosphoshikimate 1-carboxyvinyltransferase (432 aa).

Residues Lys-23, Ser-24, and Arg-28 each contribute to the 3-phosphoshikimate site. Lys-23 is a phosphoenolpyruvate binding site. Phosphoenolpyruvate-binding residues include Gly-95 and Arg-123. Positions 167, 169, 317, and 344 each coordinate 3-phosphoshikimate. Gln-169 is a binding site for phosphoenolpyruvate. Asp-317 acts as the Proton acceptor in catalysis. Residues Arg-348 and Arg-390 each contribute to the phosphoenolpyruvate site.

The protein belongs to the EPSP synthase family. As to quaternary structure, monomer.

The protein localises to the cytoplasm. The enzyme catalyses 3-phosphoshikimate + phosphoenolpyruvate = 5-O-(1-carboxyvinyl)-3-phosphoshikimate + phosphate. Its pathway is metabolic intermediate biosynthesis; chorismate biosynthesis; chorismate from D-erythrose 4-phosphate and phosphoenolpyruvate: step 6/7. Functionally, catalyzes the transfer of the enolpyruvyl moiety of phosphoenolpyruvate (PEP) to the 5-hydroxyl of shikimate-3-phosphate (S3P) to produce enolpyruvyl shikimate-3-phosphate and inorganic phosphate. The sequence is that of 3-phosphoshikimate 1-carboxyvinyltransferase from Staphylococcus haemolyticus (strain JCSC1435).